The sequence spans 237 residues: Chaplin-B (237 aa).

The N-terminal stretch at 1 to 26 (MRRVTRNGVLAVAASGALAVTMPAYA) is a signal peptide. The region spanning 42-82 (SPGLISGNTVQLPVDVPVDVCGNTVNVVGLLNPAAGNGCAD) is the Chaplin 1 domain. Disordered regions lie at residues 81–127 (ADSG…LSGN) and 148–216 (GIGN…TLAG). Over residues 101 to 115 (GSATEATSGGAAAEG) the composition is skewed to low complexity. The Chaplin 2 domain occupies 120–160 (SPGVLSGNGVQLPVHLPVNVSGNSVNVVGIGNPAVGNESTN). A compositionally biased stretch (pro residues) spans 169–178 (VRPPAEPEPS). The short motif at 202–206 (LAHTG) is the LPXTG sorting signal element. Position 205 is a pentaglycyl murein peptidoglycan amidated threonine (threonine 205). Positions 206–237 (GTDRTLPTLAGGAALVLGGTVLYRRFRPGSGD) are cleaved as a propeptide — removed by sortase.

This sequence belongs to the chaplin family. Long chaplin subfamily.

It is found in the secreted. It localises to the cell wall. Functionally, one of 8 partially redundant surface-active proteins required for efficient formation of aerial mycelium; the short chaplins assemble into a hydrophobic, amyloidal fibrillar surface layer that envelopes and protects aerial hyphae and spores, presumably anchored to the long chaplins. Chaplins have an overlapping function with the surface-active SapB peptide; chaplins are essential on minimal medium while on rich medium both chaplins and SapB are required for efficient aerial hyphae formation. The long chaplins (ChpA, ChpB, ChpC) are not absolutely necessary for short chaplin localization or rodlet formation, but probably play a role in initiating aerial hyphae development. Chaplins are also involved in cell attachment to a hydrophobic surface. This is Chaplin-B from Streptomyces coelicolor (strain ATCC BAA-471 / A3(2) / M145).